The sequence spans 105 residues: Small ribosomal subunit protein bS20 (105 aa).

Belongs to the bacterial ribosomal protein bS20 family.

In terms of biological role, binds directly to 16S ribosomal RNA. The chain is Small ribosomal subunit protein bS20 from Moorella thermoacetica (strain ATCC 39073 / JCM 9320).